The following is a 385-amino-acid chain: tRNA (guanine(26)-N(2))-dimethyltransferase (385 aa).

Positions 1 to 379 (MNITEGVVEL…ATIAEIRSAT (379 aa)) constitute a Trm1 methyltransferase domain. S-adenosyl-L-methionine-binding residues include arginine 37, arginine 67, aspartate 82, aspartate 108, and alanine 109. Cysteine 247, cysteine 250, cysteine 267, and cysteine 270 together coordinate Zn(2+).

This sequence belongs to the class I-like SAM-binding methyltransferase superfamily. Trm1 family.

The enzyme catalyses guanosine(26) in tRNA + 2 S-adenosyl-L-methionine = N(2)-dimethylguanosine(26) in tRNA + 2 S-adenosyl-L-homocysteine + 2 H(+). Functionally, dimethylates a single guanine residue at position 26 of a number of tRNAs using S-adenosyl-L-methionine as donor of the methyl groups. This is tRNA (guanine(26)-N(2))-dimethyltransferase from Haloquadratum walsbyi (strain DSM 16790 / HBSQ001).